Reading from the N-terminus, the 147-residue chain is Large ribosomal subunit protein uL16 (147 aa).

It belongs to the universal ribosomal protein uL16 family. In terms of assembly, part of the 50S ribosomal subunit.

Its function is as follows. Binds 23S rRNA and is also seen to make contacts with the A and possibly P site tRNAs. This Lactobacillus delbrueckii subsp. bulgaricus (strain ATCC 11842 / DSM 20081 / BCRC 10696 / JCM 1002 / NBRC 13953 / NCIMB 11778 / NCTC 12712 / WDCM 00102 / Lb 14) protein is Large ribosomal subunit protein uL16.